A 97-amino-acid chain; its full sequence is MNCKPLILCTFVAVAMCLVHFGNALPAISHYTHKRFDSMGGIDFVQVCLNNCVQCKTMLGDYFQGQTCALSCLKFKGKAIPDCEDIASIAPFLNALE.

Residues 1 to 17 form the signal peptide; sequence MNCKPLILCTFVAVAMC. Cystine bridges form between C48/C72, C52/C68, and C55/C83.

Belongs to the insect eclosion hormone family. As to expression, expressed in a single pair of brain neurons which extend their processes the entire length of the central nervous system and also to the corpora cardiaca portion of the ring gland. These cells show massive depletion of immunoreactive Eh at ecdysis.

Its subcellular location is the secreted. Neuropeptide that triggers the performance of ecdysis behaviors at the end of a molt. It triggers adult behavior patterns: larval, pupal and adult ecdysis, and plasticization during the molt. In Drosophila melanogaster (Fruit fly), this protein is Eclosion hormone (Eh).